Consider the following 526-residue polypeptide: Bifunctional purine biosynthesis protein PurH (526 aa).

The MGS-like domain maps to 1–145 (MSKAPLALLS…KNHAHVGIVT (145 aa)).

It belongs to the PurH family.

The catalysed reaction is (6R)-10-formyltetrahydrofolate + 5-amino-1-(5-phospho-beta-D-ribosyl)imidazole-4-carboxamide = 5-formamido-1-(5-phospho-D-ribosyl)imidazole-4-carboxamide + (6S)-5,6,7,8-tetrahydrofolate. It catalyses the reaction IMP + H2O = 5-formamido-1-(5-phospho-D-ribosyl)imidazole-4-carboxamide. It participates in purine metabolism; IMP biosynthesis via de novo pathway; 5-formamido-1-(5-phospho-D-ribosyl)imidazole-4-carboxamide from 5-amino-1-(5-phospho-D-ribosyl)imidazole-4-carboxamide (10-formyl THF route): step 1/1. The protein operates within purine metabolism; IMP biosynthesis via de novo pathway; IMP from 5-formamido-1-(5-phospho-D-ribosyl)imidazole-4-carboxamide: step 1/1. In Psychrobacter cryohalolentis (strain ATCC BAA-1226 / DSM 17306 / VKM B-2378 / K5), this protein is Bifunctional purine biosynthesis protein PurH.